The sequence spans 1066 residues: E3 ubiquitin-protein ligase PDZRN3 (1066 aa).

The RING-type; degenerate zinc-finger motif lies at 18-56 (CALCHKVLEDPLTTPCGHVFCAGCVLPWVVQEGSCPARC). The TRAF-type zinc finger occupies 100 to 158 (EHLERCDFAPARCRHAGCGQVLLRRDVEAHMRDACDARPVGRCQEGCGLPLTHGEQRAG). 2 consecutive PDZ domains span residues 249–339 (TLVL…LRRT) and 419–503 (EVDL…IARP). Serine 427 carries the post-translational modification Phosphoserine. Residues 545–603 (QKKHDEDGGTTDTATILSNQHEKDSGVGRTDESTRNDESSEQENNGDDATASSNPLAGQ) are disordered. Polar residues predominate over residues 554–563 (TTDTATILSN). The segment covering 564 to 582 (QHEKDSGVGRTDESTRNDE) has biased composition (basic and acidic residues). The segment covering 594-603 (TASSNPLAGQ) has biased composition (polar residues). Residues 679-704 (ESVDKELELLNEELRSIELECLSIVR) are a coiled coil. Over residues 744–754 (TELPEKSDKDS) the composition is skewed to basic and acidic residues. Disordered stretches follow at residues 744–778 (TELP…PDNS) and 808–863 (LLSI…LPSY). Composition is skewed to polar residues over residues 755–769 (SSAY…STPL) and 845–855 (GSRSPTPSQKL). Residues 975 to 1025 (KEERKQHLVKAKEQRRRREFMMQSRLDCLKEQQAADDRKEMNILELSHKKM) are a coiled coil.

In terms of assembly, interacts with NLGN1 and EFNB2. Interacts with UBE2D2 and with MUSK via the first PDZ domain. Auto-ubiquitinated. In terms of tissue distribution, widely expressed, including in the heart, skeletal muscle and liver and, at lower levels, in the brain, colon, small intestine, placenta and lung. Down-regulated in ovarian serous papillary tumors.

It is found in the synapse. It localises to the cytoplasm. It catalyses the reaction S-ubiquitinyl-[E2 ubiquitin-conjugating enzyme]-L-cysteine + [acceptor protein]-L-lysine = [E2 ubiquitin-conjugating enzyme]-L-cysteine + N(6)-ubiquitinyl-[acceptor protein]-L-lysine.. It participates in protein modification; protein ubiquitination. Functionally, E3 ubiquitin-protein ligase. Plays an important role in regulating the surface level of MUSK on myotubes. Mediates the ubiquitination of MUSK, promoting its endocytosis and lysosomal degradation. Might contribute to terminal myogenic differentiation. The sequence is that of E3 ubiquitin-protein ligase PDZRN3 (PDZRN3) from Homo sapiens (Human).